Consider the following 156-residue polypeptide: D-aminoacyl-tRNA deacylase (156 aa).

The short motif at 142–143 is the Gly-cisPro motif, important for rejection of L-amino acids element; it reads GP.

Belongs to the DTD family. In terms of assembly, homodimer.

It is found in the cytoplasm. The enzyme catalyses glycyl-tRNA(Ala) + H2O = tRNA(Ala) + glycine + H(+). It carries out the reaction a D-aminoacyl-tRNA + H2O = a tRNA + a D-alpha-amino acid + H(+). Functionally, an aminoacyl-tRNA editing enzyme that deacylates mischarged D-aminoacyl-tRNAs. Also deacylates mischarged glycyl-tRNA(Ala), protecting cells against glycine mischarging by AlaRS. Acts via tRNA-based rather than protein-based catalysis; rejects L-amino acids rather than detecting D-amino acids in the active site. By recycling D-aminoacyl-tRNA to D-amino acids and free tRNA molecules, this enzyme counteracts the toxicity associated with the formation of D-aminoacyl-tRNA entities in vivo and helps enforce protein L-homochirality. The polypeptide is D-aminoacyl-tRNA deacylase (Cupriavidus metallidurans (strain ATCC 43123 / DSM 2839 / NBRC 102507 / CH34) (Ralstonia metallidurans)).